The chain runs to 519 residues: Cytochrome P450 monooxygenase AtmP (519 aa).

Residues 21-41 (SMLLVVTLVILFLWFIIPSPV) form a helical membrane-spanning segment. Cys457 lines the heme pocket.

It belongs to the cytochrome P450 family. Heme is required as a cofactor.

The protein localises to the membrane. It participates in secondary metabolite biosynthesis. Functionally, cytochrome P450 monooxygenase; part of the ATM2 gene cluster that mediates the biosynthesis of aflatrem, a tremorgenic mycotoxin with acute neurotoxic effects. Synthesis of geranylgeranyl diphosphate (GGPP) by AtmG (a GGPP synthase) precedes condensation of GGPP with indole 3-glycerol phosphate, followed by epoxidation and cyclization by AtmM (a FAD-dependent monooxygenase) and AtmC (a prenyltransferase) to produce paspaline. AtmB is also essential for paspaline production, but its exact role has not been identified yet. AtmP, a cytochrome P450 monooxygenase, subsequently converts paspaline to 13-desoxypaxilline via PC-M6 by removal of the C-30 methyl group and oxidation at C-10. AtmQ, a cytochrome P450 monooxygenase, then catalyzes the oxidation of 13-desoxypaxilline, first at C-7 to produce paspalicine and then at C-13 to form paspalinine. Finally, AtmD prenylates paspalinine to form aflatrem. The polypeptide is Cytochrome P450 monooxygenase AtmP (Aspergillus flavus).